A 238-amino-acid polypeptide reads, in one-letter code: MTLTTPLSITAIVPAAGVGSRMKADRPKQYLLLNGKTVLEHTIEQLLAFPLVNKVVVAITDGDPYFPELTLAHDSRVIRVSGGKERADSVLSGLSYVQEHQLSEWVMVHDAARPCIRHSDIDKLIAEVIPEHIGGILASPVRDTMKHATQEQCIETTIDRSVLWHALTPQLFTTELLFSALQTGLEQNLSITDESSAIELMGYQPKLVQGRADNLKITQPEDLDLAEFYLQKMKKETK.

The protein belongs to the IspD/TarI cytidylyltransferase family. IspD subfamily.

The enzyme catalyses 2-C-methyl-D-erythritol 4-phosphate + CTP + H(+) = 4-CDP-2-C-methyl-D-erythritol + diphosphate. The protein operates within isoprenoid biosynthesis; isopentenyl diphosphate biosynthesis via DXP pathway; isopentenyl diphosphate from 1-deoxy-D-xylulose 5-phosphate: step 2/6. Functionally, catalyzes the formation of 4-diphosphocytidyl-2-C-methyl-D-erythritol from CTP and 2-C-methyl-D-erythritol 4-phosphate (MEP). The polypeptide is 2-C-methyl-D-erythritol 4-phosphate cytidylyltransferase (Aliivibrio fischeri (strain ATCC 700601 / ES114) (Vibrio fischeri)).